Reading from the N-terminus, the 207-residue chain is Glutathione S-transferase P (207 aa).

Positions 1-78 (PPYTITYFPV…HLGRSFGLYG (78 aa)) constitute a GST N-terminal domain. Position 3 is a phosphotyrosine; by EGFR (Y3). Residues Y7, R13, W38, K42, and 49 to 50 (QL) each bind glutathione. T59 is modified (phosphothreonine). Residue 62-63 (QS) participates in glutathione binding. Positions 80–201 (DQKEAALVDM…ASPEHVNRPI (122 aa)) constitute a GST C-terminal domain. K100 and K113 each carry N6-succinyllysine. K125 is subject to N6-acetyllysine.

Belongs to the GST superfamily. Pi family. In terms of assembly, homodimer. Interacts with CDK5.

The protein resides in the cytoplasm. Its subcellular location is the mitochondrion. The protein localises to the nucleus. It catalyses the reaction RX + glutathione = an S-substituted glutathione + a halide anion + H(+). The enzyme catalyses prostaglandin J2 + glutathione = prostaglandin J2-S-(R)-glutathione. The catalysed reaction is prostaglandin J2 + glutathione = prostaglandin J2-S-(S)-glutathione. It carries out the reaction prostaglandin A2 + glutathione = prostaglandin A2-S-(S)-glutathione. It catalyses the reaction 11(S)-hydroxy-14(S),15(S)-epoxy-(5Z,8Z,12E)-eicosatrienoate + glutathione = (11S,15S)-dihydroxy-14(R)-S-glutathionyl-(5Z,8Z,12E)-eicosatrienoate. In terms of biological role, conjugation of reduced glutathione to a wide number of exogenous and endogenous hydrophobic electrophiles. Involved in the formation of glutathione conjugates of both prostaglandin A2 (PGA2) and prostaglandin J2 (PGJ2). Participates in the formation of novel hepoxilin regioisomers. Negatively regulates CDK5 activity via p25/p35 translocation to prevent neurodegeneration. In Sus scrofa (Pig), this protein is Glutathione S-transferase P (GSTP1).